The chain runs to 122 residues: Large ribosomal subunit protein uL14 (122 aa).

Belongs to the universal ribosomal protein uL14 family. Part of the 50S ribosomal subunit. Forms a cluster with proteins L3 and L19. In the 70S ribosome, L14 and L19 interact and together make contacts with the 16S rRNA in bridges B5 and B8.

In terms of biological role, binds to 23S rRNA. Forms part of two intersubunit bridges in the 70S ribosome. This Nitrobacter winogradskyi (strain ATCC 25391 / DSM 10237 / CIP 104748 / NCIMB 11846 / Nb-255) protein is Large ribosomal subunit protein uL14.